Reading from the N-terminus, the 186-residue chain is Ribosome-recycling factor (186 aa).

It belongs to the RRF family.

Its subcellular location is the cytoplasm. Functionally, responsible for the release of ribosomes from messenger RNA at the termination of protein biosynthesis. May increase the efficiency of translation by recycling ribosomes from one round of translation to another. The protein is Ribosome-recycling factor of Limosilactobacillus reuteri (Lactobacillus reuteri).